The following is a 316-amino-acid chain: Metal cation efflux system protein CzcD (316 aa).

Residues 1–16 lie on the Cytoplasmic side of the membrane; sequence MGAGHSHDHPGGNERS. A helical transmembrane segment spans residues 17–37; that stretch reads LKIALALTGTFLIAEVVGGVM. The Periplasmic segment spans residues 38 to 46; the sequence is TKSLALISD. Residues 47–67 form a helical membrane-spanning segment; the sequence is AAHMLTDTVALAIALAAIAIA. The Cytoplasmic portion of the chain corresponds to 68-81; the sequence is KRPADKKRTFGYYR. The chain crosses the membrane as a helical span at residues 82–102; sequence FEILAAAFNALLLFGVAIYIL. Over 103-114 the chain is Periplasmic; that stretch reads YEAYLRLKSPPQ. Residues 115–135 form a helical membrane-spanning segment; sequence IESTGMFVVAVLGLIINLISM. At 136-151 the chain is on the cytoplasmic side; sequence RMLSSGQSSSLNVKGA. A run of 2 helical transmembrane segments spans residues 152-172 and 174-194; these read YLEVWSDLLGSVGVIAGAIII and FTGWAWVDSAIAVLIGLWVLP. The Cytoplasmic portion of the chain corresponds to 195 to 316; that stretch reads RTWILLKSSL…GSKSLAAGGN (122 aa).

Belongs to the cation diffusion facilitator (CDF) transporter (TC 2.A.4) family. SLC30A subfamily.

It localises to the cell inner membrane. With respect to regulation, efflux is inhibited by FCCP. Functionally, mediates a low-level metal ion resistance, probably by efflux of cations from the cytoplasm into the periplasm. Also mediates resistance to cobalt, cadmium and zinc via regulation of the Czc system. May repress expression of the Czc system by an export of the inducing cations. Binds and transports zinc. Can also bind cobalt, copper and nickel. The sequence is that of Metal cation efflux system protein CzcD (czcD) from Cupriavidus metallidurans (strain ATCC 43123 / DSM 2839 / NBRC 102507 / CH34) (Ralstonia metallidurans).